The chain runs to 334 residues: Chitinase 9 (334 aa).

The signal sequence occupies residues 1 to 23; sequence MKATTTAVALLVAAAAMAAQVVA. One can recognise a Chitin-binding type-1 domain in the interval 24-64; the sequence is EQCGSQAGGALCPNCLCCSSYGWCGSTSDYCGDGCQSQCDG. 8 cysteine pairs are disulfide-bonded: Cys26–Cys41, Cys35–Cys47, Cys38–Cys65, Cys40–Cys54, Cys58–Cys62, Cys107–Cys169, Cys181–Cys189, and Cys288–Cys320. Glu151 serves as the catalytic Proton donor.

This sequence belongs to the glycosyl hydrolase 19 family. Chitinase class I subfamily. As to expression, expressed at high levels in roots, sheaths and meristems.

The enzyme catalyses Random endo-hydrolysis of N-acetyl-beta-D-glucosaminide (1-&gt;4)-beta-linkages in chitin and chitodextrins.. May play a role in defense against fungal pathogens containing chitin. The sequence is that of Chitinase 9 (Cht9) from Oryza sativa subsp. japonica (Rice).